The chain runs to 187 residues: Large ribosomal subunit protein uL5 (187 aa).

This sequence belongs to the universal ribosomal protein uL5 family. In terms of assembly, part of the 50S ribosomal subunit; part of the 5S rRNA/L5/L18/L25 subcomplex. Contacts the 5S rRNA and the P site tRNA. Forms a bridge to the 30S subunit in the 70S ribosome.

Its function is as follows. This is one of the proteins that bind and probably mediate the attachment of the 5S RNA into the large ribosomal subunit, where it forms part of the central protuberance. In the 70S ribosome it contacts protein S13 of the 30S subunit (bridge B1b), connecting the 2 subunits; this bridge is implicated in subunit movement. Contacts the P site tRNA; the 5S rRNA and some of its associated proteins might help stabilize positioning of ribosome-bound tRNAs. In Corynebacterium diphtheriae (strain ATCC 700971 / NCTC 13129 / Biotype gravis), this protein is Large ribosomal subunit protein uL5.